A 192-amino-acid polypeptide reads, in one-letter code: uncharacterized protein (192 aa).

Positions 29–160 (QRQAAVLIPV…PLDVYRRGNS (132 aa)) constitute a Nudix hydrolase domain. The short motif at 67 to 89 (GAVDSTDASLIAAALREAQEEVA) is the Nudix box element. Residues Glu-83 and Glu-87 each coordinate Mg(2+).

It belongs to the Nudix hydrolase family. PCD1 subfamily. The cofactor is Mn(2+). Mg(2+) is required as a cofactor.

Its function is as follows. Probably mediates the hydrolysis of some nucleoside diphosphate derivatives. This is an uncharacterized protein from Salmonella choleraesuis (strain SC-B67).